The chain runs to 199 residues: Large ribosomal subunit protein uL13A (199 aa).

The residue at position 2 (Ser-2) is an N-acetylserine. A Glycyl lysine isopeptide (Lys-Gly) (interchain with G-Cter in ubiquitin) cross-link involves residue Lys-177.

The protein belongs to the universal ribosomal protein uL13 family. In terms of assembly, component of the large ribosomal subunit (LSU). Mature yeast ribosomes consist of a small (40S) and a large (60S) subunit. The 40S small subunit contains 1 molecule of ribosomal RNA (18S rRNA) and 33 different proteins (encoded by 57 genes). The large 60S subunit contains 3 rRNA molecules (25S, 5.8S and 5S rRNA) and 46 different proteins (encoded by 81 genes). Post-translationally, N-terminally acetylated by acetyltransferase NatA.

The protein localises to the cytoplasm. Its function is as follows. Component of the ribosome, a large ribonucleoprotein complex responsible for the synthesis of proteins in the cell. The small ribosomal subunit (SSU) binds messenger RNAs (mRNAs) and translates the encoded message by selecting cognate aminoacyl-transfer RNA (tRNA) molecules. The large subunit (LSU) contains the ribosomal catalytic site termed the peptidyl transferase center (PTC), which catalyzes the formation of peptide bonds, thereby polymerizing the amino acids delivered by tRNAs into a polypeptide chain. The nascent polypeptides leave the ribosome through a tunnel in the LSU and interact with protein factors that function in enzymatic processing, targeting, and the membrane insertion of nascent chains at the exit of the ribosomal tunnel. The chain is Large ribosomal subunit protein uL13A from Saccharomyces cerevisiae (strain ATCC 204508 / S288c) (Baker's yeast).